Here is a 168-residue protein sequence, read N- to C-terminus: MPTLLLGAAIPFGTIAYTLFIFLILLVMLRKFAWGPLMGIMKEREEHVTNEIDAAERSNAEAKKLVEEQREMLKQSRVEAQELIERAKKQAVDQKDVIVAAAKEEAESIKASAVQEIQREKEQAIAALQEQVASLSVQIASKVIEKELKEEDQVKLIRDYIKEVGEAR.

A helical membrane pass occupies residues 9–29 (AIPFGTIAYTLFIFLILLVML).

The protein belongs to the ATPase B chain family. In terms of assembly, F-type ATPases have 2 components, F(1) - the catalytic core - and F(0) - the membrane proton channel. F(1) has five subunits: alpha(3), beta(3), gamma(1), delta(1), epsilon(1). F(0) has three main subunits: a(1), b(2) and c(10-14). The alpha and beta chains form an alternating ring which encloses part of the gamma chain. F(1) is attached to F(0) by a central stalk formed by the gamma and epsilon chains, while a peripheral stalk is formed by the delta and b chains.

Its subcellular location is the cell membrane. F(1)F(0) ATP synthase produces ATP from ADP in the presence of a proton or sodium gradient. F-type ATPases consist of two structural domains, F(1) containing the extramembraneous catalytic core and F(0) containing the membrane proton channel, linked together by a central stalk and a peripheral stalk. During catalysis, ATP synthesis in the catalytic domain of F(1) is coupled via a rotary mechanism of the central stalk subunits to proton translocation. Functionally, component of the F(0) channel, it forms part of the peripheral stalk, linking F(1) to F(0). The polypeptide is ATP synthase subunit b (Bacillus cereus (strain G9842)).